Reading from the N-terminus, the 440-residue chain is Thymidine phosphorylase (440 aa).

The protein belongs to the thymidine/pyrimidine-nucleoside phosphorylase family. Homodimer.

The enzyme catalyses thymidine + phosphate = 2-deoxy-alpha-D-ribose 1-phosphate + thymine. It functions in the pathway pyrimidine metabolism; dTMP biosynthesis via salvage pathway; dTMP from thymine: step 1/2. Its function is as follows. The enzymes which catalyze the reversible phosphorolysis of pyrimidine nucleosides are involved in the degradation of these compounds and in their utilization as carbon and energy sources, or in the rescue of pyrimidine bases for nucleotide synthesis. The protein is Thymidine phosphorylase of Salmonella agona (strain SL483).